We begin with the raw amino-acid sequence, 330 residues long: Carbonic anhydrase (330 aa).

The chloroplast transit peptide-like stretch occupies residues 1–109 (MSTASAFATN…AAARIDQITA (109 aa)).

Belongs to the beta-class carbonic anhydrase family.

It is found in the cytoplasm. The catalysed reaction is hydrogencarbonate + H(+) = CO2 + H2O. Reversible hydration of carbon dioxide. This Flaveria brownii (Brown's yellowtops) protein is Carbonic anhydrase.